The chain runs to 201 residues: Small ribosomal subunit protein uS4c (201 aa).

The 64-residue stretch at 89-152 folds into the S4 RNA-binding domain; it reads MRLDNILFRL…NSRTLVQNLL (64 aa).

Belongs to the universal ribosomal protein uS4 family. In terms of assembly, part of the 30S ribosomal subunit. Contacts protein S5. The interaction surface between S4 and S5 is involved in control of translational fidelity.

It localises to the plastid. The protein resides in the chloroplast. In terms of biological role, one of the primary rRNA binding proteins, it binds directly to 16S rRNA where it nucleates assembly of the body of the 30S subunit. Its function is as follows. With S5 and S12 plays an important role in translational accuracy. The sequence is that of Small ribosomal subunit protein uS4c (rps4) from Capsella bursa-pastoris (Shepherd's purse).